We begin with the raw amino-acid sequence, 287 residues long: Glutamate racemase (287 aa).

Substrate is bound by residues 32-33 (DS) and 64-65 (YG). The active-site Proton donor/acceptor is the Cys-96. Position 97–98 (97–98 (NT)) interacts with substrate. Cys-208 acts as the Proton donor/acceptor in catalysis. A substrate-binding site is contributed by 209-210 (TH).

This sequence belongs to the aspartate/glutamate racemases family.

It catalyses the reaction L-glutamate = D-glutamate. Its pathway is cell wall biogenesis; peptidoglycan biosynthesis. Its function is as follows. Provides the (R)-glutamate required for cell wall biosynthesis. The protein is Glutamate racemase of Serratia proteamaculans (strain 568).